Here is a 161-residue protein sequence, read N- to C-terminus: uncharacterized protein (161 aa).

It belongs to the SixA phosphatase family.

This is an uncharacterized protein from Mycobacterium leprae (strain TN).